A 2514-amino-acid chain; its full sequence is Highly reducing polyketide synthase sphB (2514 aa).

Positions 66–486 constitute a Ketosynthase family 3 (KS3) domain; that stretch reads QVPIAICGMA…GANAHVILES (421 aa). Active-site for beta-ketoacyl synthase activity residues include Cys-238, His-374, and His-409. One can recognise a Malonyl-CoA:ACP transacylase (MAT) domain in the interval 580–904; that stretch reads MVFTGQGAQW…AIGALHSLNV (325 aa). The tract at residues 950–1079 is N-terminal hotdog fold; that stretch reads HDLLGARVAE…GEVCAQSSAP (130 aa). The PKS/mFAS DH domain occupies 950–1240; that stretch reads HDLLGARVAE…AADISDTHAA (291 aa). His-982 functions as the Proton acceptor; for dehydratase activity in the catalytic mechanism. Residues 1089-1240 form a C-terminal hotdog fold region; that stretch reads PRTLNVRKWY…AADISDTHAA (152 aa). Catalysis depends on Asp-1150, which acts as the Proton donor; for dehydratase activity. Residues 1319-1578 form a methyltransferase (CMet) domain region; the sequence is WTGLDHEAIS…EPHQVTTTMV (260 aa). The region spanning 1779–2092 is the Enoyl reductase (ER) domain; sequence GRVNSLHYAR…KGQHIGRVGV (314 aa). The 178-residue stretch at 2120–2297 folds into the Ketoreductase (KR) domain; sequence ASYLMVGGLG…ASVVDMGAVE (178 aa). The Carrier domain occupies 2427–2504; sequence EAAKLFAVEI…ILGQYAANEV (78 aa). An O-(pantetheine 4'-phosphoryl)serine modification is found at Ser-2464.

Requires pantetheine 4'-phosphate as cofactor.

The enzyme catalyses holo-[ACP] + 8 malonyl-CoA + acetyl-CoA + 5 AH2 + 8 NADPH + 16 H(+) = (3R)-hydroxyoctadeca-4,10-dienoyl-[ACP] + 5 A + 8 CO2 + 8 NADP(+) + 9 CoA + 7 H2O. Its pathway is secondary metabolite biosynthesis. Highly reducing polyketide synthase; part of the gene cluster that mediates the biosynthesis of sphingofungins, bioactive molecules acting as sphingolipid inhibitors via inhibiting serine palmitoyl transferase (SPT). Within the pathway, sphB catalyzes the first step of sphingofungin biosynthesis by condensing 8 units of malonyl-CoA with one starter unit of acetyl-CoA, leading to an C18 polyketide precursor 3-hydroxyoctadeca-4,10-dienoyl-ACP containing one delta-6 desaturation and one delta-12 desaturation. The PKS sphB does not contain any putative thioesterase domain for releasing the nascent polyketide chain and it has been suggested that aminoacyl transferases can facilitate the polyketide chain release. The aminoacyl transferase sphA uses the sphB product to produce 3-keto-presphingofungin by adding an aminomalonate molecule. SphF then reduces the C-3 ketone of 3-keto-presphingofungin which leads to presphingofungin. The cytochrome P450 monooxygenase sphH converts presphingofungin into sphingofungin B1 which is further converted to sphingofungin B by the dioxygenase sphC. SphC is also able to convert presphingofungin into sphingofungin B2. The acetyltransferase sphE acetylates sphingofungin B to produce sphingofungin C, but can also convert sphingofungin B1 into sphingofungin C1 and sphingofungin B2 into sphingofungin C2. Finally, sphingofungin C can be spontaneously converted into sphingofungin D. This is Highly reducing polyketide synthase sphB from Aspergillus fumigatus (strain CBS 144.89 / FGSC A1163 / CEA10) (Neosartorya fumigata).